A 163-amino-acid polypeptide reads, in one-letter code: Large ribosomal subunit protein bL19 (163 aa).

The span at 131–150 (ISQERKASGKDQASKPEVRP) shows a compositional bias: basic and acidic residues. Residues 131–163 (ISQERKASGKDQASKPEVRPQGKKPAPKPKAKK) are disordered. The segment covering 151 to 163 (QGKKPAPKPKAKK) has biased composition (basic residues).

It belongs to the bacterial ribosomal protein bL19 family.

This protein is located at the 30S-50S ribosomal subunit interface and may play a role in the structure and function of the aminoacyl-tRNA binding site. The protein is Large ribosomal subunit protein bL19 of Rhodospirillum rubrum (strain ATCC 11170 / ATH 1.1.1 / DSM 467 / LMG 4362 / NCIMB 8255 / S1).